The primary structure comprises 410 residues: 3-phosphoshikimate 1-carboxyvinyltransferase (410 aa).

3-phosphoshikimate contacts are provided by Lys21, Ser22, and Arg26. Residue Lys21 coordinates phosphoenolpyruvate. Positions 69 and 97 each coordinate phosphoenolpyruvate. 6 residues coordinate 3-phosphoshikimate: Ser143, Ser144, Gln145, Ser171, Asp288, and Lys315. Phosphoenolpyruvate is bound at residue Gln145. Catalysis depends on Asp288, which acts as the Proton acceptor. Positions 319, 364, and 389 each coordinate phosphoenolpyruvate.

Belongs to the EPSP synthase family. As to quaternary structure, monomer.

It localises to the cytoplasm. The enzyme catalyses 3-phosphoshikimate + phosphoenolpyruvate = 5-O-(1-carboxyvinyl)-3-phosphoshikimate + phosphate. Its pathway is metabolic intermediate biosynthesis; chorismate biosynthesis; chorismate from D-erythrose 4-phosphate and phosphoenolpyruvate: step 6/7. Functionally, catalyzes the transfer of the enolpyruvyl moiety of phosphoenolpyruvate (PEP) to the 5-hydroxyl of shikimate-3-phosphate (S3P) to produce enolpyruvyl shikimate-3-phosphate and inorganic phosphate. The polypeptide is 3-phosphoshikimate 1-carboxyvinyltransferase (Bacteroides fragilis (strain ATCC 25285 / DSM 2151 / CCUG 4856 / JCM 11019 / LMG 10263 / NCTC 9343 / Onslow / VPI 2553 / EN-2)).